Consider the following 326-residue polypeptide: N-acetyl-gamma-glutamyl-phosphate reductase (326 aa).

Cysteine 155 is an active-site residue.

This sequence belongs to the NAGSA dehydrogenase family. Type 1 subfamily.

It localises to the cytoplasm. It catalyses the reaction N-acetyl-L-glutamate 5-semialdehyde + phosphate + NADP(+) = N-acetyl-L-glutamyl 5-phosphate + NADPH + H(+). It participates in amino-acid biosynthesis; L-arginine biosynthesis; N(2)-acetyl-L-ornithine from L-glutamate: step 3/4. Its function is as follows. Catalyzes the NADPH-dependent reduction of N-acetyl-5-glutamyl phosphate to yield N-acetyl-L-glutamate 5-semialdehyde. This chain is N-acetyl-gamma-glutamyl-phosphate reductase, found in Shewanella baltica (strain OS185).